We begin with the raw amino-acid sequence, 483 residues long: M protein, serotype 6 (483 aa).

A signal peptide spans 1–42; the sequence is MAKNNTNRHYSLRKLKKGTASVAVALSVIGAGLVVNTNEVSA. Residues 54 to 171 are a coiled coil; that stretch reads DKARELLNKY…IGTLKKTLDE (118 aa). A run of 8 repeats spans residues 69–75, 76–82, 83–89, 90–96, 97–103, 104–110, 111–117, and 118–124. The 10 X 7 AA approximate tandem repeats of [KMNR]-L-[TQ]-[TDA]-[ENQ]-N-[NDK] stretch occupies residues 69 to 138; it reads MLQANNDKLT…EENRLTTENK (70 aa). Residues 74–87 show a composition bias toward polar residues; it reads NDKLTTENNNLTDQ. A disordered region spans residues 74–157; that stretch reads NDKLTTENNN…EEEAANKERE (84 aa). Residues 88–113 show a composition bias toward low complexity; sequence NKNLTTENKNLTDQNKNLTTENKNLT. 2 stretches are compositionally biased toward basic and acidic residues: residues 122–135 and 143–157; these read ENKE…RLTT and KLSE…KERE. The 9-1; approximate repeat unit spans residues 125–131; the sequence is ELKAEEN. 5 tandem repeats follow at residues 132-138, 157-181, 182-206, 207-231, and 232-256. The segment at 157–269 is 4.5 X 25 AA tandem repeats of E-[NS]-K-E-[TA]-I-G-T-L-K-K-[TI]-L-D-E-T-V-K-D-K-I-A-[KR]-E-Q; it reads ENKEAIGTLK…QDIGALKQEL (113 aa). Disordered stretches follow at residues 255–298 and 314–345; these read EQKS…EAKK and VKEE…VEKA. Residues 257-269 form a 5-2; truncated repeat; the sequence is KSKQDIGALKQEL. 2 stretches are compositionally biased toward basic and acidic residues: residues 268 to 298 and 328 to 345; these read ELAK…EAKK and LRRD…VEKA. C repeat units follow at residues 270–304 and 312–346; these read AKKD…EKDL and DKVK…EKAL. A binding to CD46 region spans residues 279-347; sequence SEASRKGLRR…AKKQVEKALE (69 aa). The tract at residues 279-347 is two directly repeated 27 amino acid blocks separated by 15 amino acids; the sequence is SEASRKGLRR…AKKQVEKALE (69 aa). Positions 280–408 form a coiled coil; the sequence is EASRKGLRRD…LAKLRAGKAS (129 aa). Positions 348–411 are hydrophilic; that stretch reads EANSKLAALE…LRAGKASDSQ (64 aa). 4 D repeats span residues 379-384, 385-390, 393-398, and 400-405; these read AKLEAE, AKALKE, AKQAEE, and AKLRAG. The disordered stretch occupies residues 400-455; sequence AKLRAGKASDSQTPDAKPGNKVVPGKGQAPQAGTKPNQNKAPMKETKRQLPSTGET. An LPXTG sorting signal motif is present at residues 449–453; sequence LPSTG. The residue at position 452 (Thr-452) is a Pentaglycyl murein peptidoglycan amidated threonine. The propeptide at 453–483 is removed by sortase; it reads GETANPFFTAAALTVMATAGVAAVVKRKEEN.

It belongs to the M protein family.

The protein localises to the secreted. It is found in the cell wall. Functionally, mediates the attachment of S.pyogenes to skin epithelial cells through the binding of the human membrane cofactor protein CD46. Also binds to the factor H and factor H-like protein 1. These interactions could contribute to the fact that the M6 protein protects the bacterium from the phagocytosis by regulating the complement activation on the bacterial surface. The chain is M protein, serotype 6 (emm6) from Streptococcus pyogenes.